A 339-amino-acid polypeptide reads, in one-letter code: MVSSQPKYDLIREVGRGSYGLVYEALVRRTGQRVAVKKIRCQAPENVELALREFWALSSIQSQHPNVIHLEECVLQRDGMVQRMLHGSSSVLYLPLVETSLKGEIAFDPRSTYCLWFVMDFCDGGDMNEYILTRRPSRRTNTSFMLQLSSALAFLHKNQIIHRDLKPDNILVCKSRDGVDEPTLKVADFGLSKVCSSSGLNPEEPANVNKSFLSTACGTDFYMAPEVWEGHYTAKADIFALGVILWAMLERITITDTHTKKRLLGGYVQRGAQVVPVGEALLENPKLELLIPVKKKSMNRRMKQLLRQMLSANPQERPDAFQLELKLIQIAFRDFTWET.

Residues 8–332 (YDLIREVGRG…LELKLIQIAF (325 aa)) enclose the Protein kinase domain. ATP-binding positions include 14–22 (VGRGSYGLV) and Lys-37. The Proton acceptor role is filled by Asp-164.

Belongs to the protein kinase superfamily. Ser/Thr protein kinase family.

The protein localises to the nucleus. It catalyses the reaction L-seryl-[protein] + ATP = O-phospho-L-seryl-[protein] + ADP + H(+). The enzyme catalyses L-threonyl-[protein] + ATP = O-phospho-L-threonyl-[protein] + ADP + H(+). The protein is Serine/threonine-protein kinase pdik1l-B (pdik1-b) of Xenopus laevis (African clawed frog).